The sequence spans 277 residues: Phosphonates import ATP-binding protein PhnC (277 aa).

An ABC transporter domain is found at 3–251 (IKLDKVSARH…RLQALYAQHL (249 aa)). 40-47 (GPSGAGKT) provides a ligand contact to ATP.

This sequence belongs to the ABC transporter superfamily. Phosphonates importer (TC 3.A.1.9.1) family. In terms of assembly, the complex is composed of two ATP-binding proteins (PhnC), two transmembrane proteins (PhnE) and a solute-binding protein (PhnD).

The protein resides in the cell inner membrane. It catalyses the reaction phosphonate(out) + ATP + H2O = phosphonate(in) + ADP + phosphate + H(+). Part of the ABC transporter complex PhnCDE involved in phosphonates import. Responsible for energy coupling to the transport system. This is Phosphonates import ATP-binding protein PhnC from Polaromonas sp. (strain JS666 / ATCC BAA-500).